Reading from the N-terminus, the 364-residue chain is Very-long-chain (3R)-3-hydroxyacyl-CoA dehydratase 3 (364 aa).

The Cytoplasmic portion of the chain corresponds to 1–151 (MAMENQVLTP…ETLTNLRKGY (151 aa)). The CS domain occupies 7 to 96 (VLTPHVYWAQ…KVSQWWERLT (90 aa)). Thr-9 carries the phosphothreonine modification. Residues 113 to 138 (LDESDAEMELRAKEEERLNKLRLESE) adopt a coiled-coil conformation. Residues Ser-116 and Ser-137 each carry the phosphoserine modification. The helical transmembrane segment at 152-172 (LFMYNLVQFLGFSWIFVNLTV) threads the bilayer. Residues 173 to 191 (RFCILGKESFYDTFHTVAD) are Lumenal-facing. A helical membrane pass occupies residues 192 to 212 (MMYFCQMLAVVETINAAIGVT). Topologically, residues 213 to 214 (TS) are cytoplasmic. The helical transmembrane segment at 215-235 (PVLPSLIQLLGRNFILFIIFG) threads the bilayer. The Lumenal segment spans residues 236–244 (TMEEMQNKA). Residues 245–265 (VVFFVFYLWSAIEIFRYSFYM) form a helical membrane-spanning segment. Residues 266–282 (LTCIDMDWEVLTWLRYT) are Cytoplasmic-facing. The helical transmembrane segment at 283–303 (LWIPLYPLGCLAEAVSVVQSI) threads the bilayer. Residues Tyr-288 and Glu-295 contribute to the active site. Residues 304–324 (PIFNETGRFSFTLPYPVKIKV) lie on the Lumenal side of the membrane. Residues 325–345 (RFSFFLQIYLIMIFLGLYINF) traverse the membrane as a helical segment. At 346–364 (RHLYKQRRRRYGQKKKKIH) the chain is on the cytoplasmic side.

The protein belongs to the very long-chain fatty acids dehydratase HACD family. May interact with enzymes of the ELO family (including ELOVL1); with those enzymes that mediate condensation, the first of the four steps of the reaction cycle responsible for fatty acids elongation, may be part of a larger fatty acids elongase complex. Interacts with RAC1.

It localises to the endoplasmic reticulum membrane. It carries out the reaction a very-long-chain (3R)-3-hydroxyacyl-CoA = a very-long-chain (2E)-enoyl-CoA + H2O. It catalyses the reaction (3R)-hydroxyhexadecanoyl-CoA = (2E)-hexadecenoyl-CoA + H2O. Its pathway is lipid metabolism; fatty acid biosynthesis. Functionally, catalyzes the third of the four reactions of the long-chain fatty acids elongation cycle. This endoplasmic reticulum-bound enzymatic process, allows the addition of two carbons to the chain of long- and very long-chain fatty acids/VLCFAs per cycle. This enzyme catalyzes the dehydration of the 3-hydroxyacyl-CoA intermediate into trans-2,3-enoyl-CoA, within each cycle of fatty acid elongation. Thereby, it participates in the production of VLCFAs of different chain lengths that are involved in multiple biological processes as precursors of membrane lipids and lipid mediators. Involved in Rac1-signaling pathways leading to the modulation of gene expression. In Pongo abelii (Sumatran orangutan), this protein is Very-long-chain (3R)-3-hydroxyacyl-CoA dehydratase 3.